Here is a 609-residue protein sequence, read N- to C-terminus: UvrABC system protein C (609 aa).

One can recognise a GIY-YIG domain in the interval 16-94; it reads SSAGVYRMYD…IKQYMPKYNV (79 aa). The UVR domain maps to 203-238; that stretch reads QQVISALVDKMELAAERQAYEQAARFRDQIMALRKV.

The protein belongs to the UvrC family. Interacts with UvrB in an incision complex.

It localises to the cytoplasm. Its function is as follows. The UvrABC repair system catalyzes the recognition and processing of DNA lesions. UvrC both incises the 5' and 3' sides of the lesion. The N-terminal half is responsible for the 3' incision and the C-terminal half is responsible for the 5' incision. In Shewanella baltica (strain OS185), this protein is UvrABC system protein C.